A 601-amino-acid chain; its full sequence is MEGSDFLLAGVLFLFAAVAAVPLASRLGIGAVLGYLLAGIAIGPWGLGFISDVDEILHFSELGVVFLMFIIGLELNPSKLWQLRRSIFGVGAAQVLLSAALLAGLLMLTDFAWQAAVVGGIGLAMSSTAMALQLMREKGMNRSESGQLGFSVLLFQDLAVIPALALVPLLAGSADEHFDWMKIGMKVLAFVGMLIGGRYLLRPVFRFIAASGVREVFTAATLLLVLGSALFMDALGLSMALGTFIAGVLLAESEYRHELETAIDPFKGLLLGLFFISVGMSLNLGVLYTHLLWVVISVVVLVAVKILVLYLLARLYGVRSSERMQFAGVLSQGGEFAFVLFSTASSQRLFQGDQMALLLVTVTLSMMTTPLLMKLVDKWLSRQFNGPEEEDEKPWVNDDKPQVIVVGFGRFGQVIGRLLMANKMRITVLERDISAVNLMRKYGYKVYYGDATQVDLLRSAGAEAAVSIVITCNEPEDTMKLVEICQQHFPHLHILARARGRVEAHELLQAGVTQFSRETFSSALELGRKTLVTLGMHPHQAQRAQLHFRRLDMRMLRELIPMHADTVQISRAREARRELEEIFQREMQQERRQLDGWDEFE.

Helical transmembrane passes span 4-24 (SDFLLAGVLFLFAAVAAVPLA), 29-49 (IGAVLGYLLAGIAIGPWGLGF), 55-75 (EILHFSELGVVFLMFIIGLEL), 87-107 (IFGVGAAQVLLSAALLAGLLM), 115-135 (AAVVGGIGLAMSSTAMALQLM), 152-172 (VLLFQDLAVIPALALVPLLAG), 177-197 (HFDWMKIGMKVLAFVGMLIGG), 207-227 (FIAASGVREVFTAATLLLVLG), 230-250 (LFMDALGLSMALGTFIAGVLL), 268-288 (GLLLGLFFISVGMSLNLGVLY), 291-311 (LLWVVISVVVLVAVKILVLYL), 324-344 (MQFAGVLSQGGEFAFVLFSTA), and 356-376 (ALLLVTVTLSMMTTPLLMKLV). The 120-residue stretch at 400-519 (KPQVIVVGFG…AGVTQFSRET (120 aa)) folds into the RCK N-terminal domain.

Belongs to the monovalent cation:proton antiporter 2 (CPA2) transporter (TC 2.A.37) family. KefB subfamily. In terms of assembly, interacts with the regulatory subunit KefG.

The protein resides in the cell inner membrane. In terms of biological role, pore-forming subunit of a potassium efflux system that confers protection against electrophiles. Catalyzes K(+)/H(+) antiport. The protein is Glutathione-regulated potassium-efflux system protein KefB of Escherichia coli O139:H28 (strain E24377A / ETEC).